The chain runs to 206 residues: N-(5'-phosphoribosyl)anthranilate isomerase (206 aa).

The protein belongs to the TrpF family.

The catalysed reaction is N-(5-phospho-beta-D-ribosyl)anthranilate = 1-(2-carboxyphenylamino)-1-deoxy-D-ribulose 5-phosphate. Its pathway is amino-acid biosynthesis; L-tryptophan biosynthesis; L-tryptophan from chorismate: step 3/5. This chain is N-(5'-phosphoribosyl)anthranilate isomerase, found in Citrifermentans bemidjiense (strain ATCC BAA-1014 / DSM 16622 / JCM 12645 / Bem) (Geobacter bemidjiensis).